The chain runs to 121 residues: Cell division protein FtsB (121 aa).

Residues 1 to 6 lie on the Cytoplasmic side of the membrane; that stretch reads MRNWRW. Residues 7–24 traverse the membrane as a helical segment; that stretch reads LLLVLAVLLAWLQYRFWF. Over 25–121 the chain is Periplasmic; it reads GPGNSGEVMM…AASADPVDHP (97 aa). Positions 31–66 form a coiled coil; it reads EVMMLEAQVAHQTRDNEGLRQRNQALAAEVKDLKDG. A disordered region spans residues 98–121; sequence PPAAQEAAPPAQPPAASADPVDHP.

It belongs to the FtsB family. As to quaternary structure, part of a complex composed of FtsB, FtsL and FtsQ.

It localises to the cell inner membrane. Essential cell division protein. May link together the upstream cell division proteins, which are predominantly cytoplasmic, with the downstream cell division proteins, which are predominantly periplasmic. The protein is Cell division protein FtsB of Xanthomonas campestris pv. campestris (strain 8004).